The chain runs to 128 residues: Large ribosomal subunit protein eL22 (128 aa).

Belongs to the eukaryotic ribosomal protein eL22 family. In terms of assembly, component of the large ribosomal subunit.

The protein resides in the cytoplasm. Its function is as follows. Component of the large ribosomal subunit. The ribosome is a large ribonucleoprotein complex responsible for the synthesis of proteins in the cell. The chain is Large ribosomal subunit protein eL22 (rpl22) from Ictalurus punctatus (Channel catfish).